Here is a 112-residue protein sequence, read N- to C-terminus: Large ribosomal subunit protein eL34A (112 aa).

The protein belongs to the eukaryotic ribosomal protein eL34 family. Component of the large ribosomal subunit (LSU). Mature yeast ribosomes consist of a small (40S) and a large (60S) subunit. The 40S small subunit contains 1 molecule of ribosomal RNA (18S rRNA) and at least 33 different proteins. The large 60S subunit contains 3 rRNA molecules (25S, 5.8S and 5S rRNA) and at least 46 different proteins.

It localises to the cytoplasm. Its function is as follows. Component of the ribosome, a large ribonucleoprotein complex responsible for the synthesis of proteins in the cell. The small ribosomal subunit (SSU) binds messenger RNAs (mRNAs) and translates the encoded message by selecting cognate aminoacyl-transfer RNA (tRNA) molecules. The large subunit (LSU) contains the ribosomal catalytic site termed the peptidyl transferase center (PTC), which catalyzes the formation of peptide bonds, thereby polymerizing the amino acids delivered by tRNAs into a polypeptide chain. The nascent polypeptides leave the ribosome through a tunnel in the LSU and interact with protein factors that function in enzymatic processing, targeting, and the membrane insertion of nascent chains at the exit of the ribosomal tunnel. This Schizosaccharomyces pombe (strain 972 / ATCC 24843) (Fission yeast) protein is Large ribosomal subunit protein eL34A (rpl3401).